Consider the following 602-residue polypeptide: Elongation factor 4 (602 aa).

Residues 2 to 184 form the tr-type G domain; the sequence is KHIRNFSIIA…AIVAKVPAPR (183 aa). Residues 14–19 and 131–134 each bind GTP; these read DHGKST and NKMD.

Belongs to the TRAFAC class translation factor GTPase superfamily. Classic translation factor GTPase family. LepA subfamily.

It localises to the cell inner membrane. The enzyme catalyses GTP + H2O = GDP + phosphate + H(+). Required for accurate and efficient protein synthesis under certain stress conditions. May act as a fidelity factor of the translation reaction, by catalyzing a one-codon backward translocation of tRNAs on improperly translocated ribosomes. Back-translocation proceeds from a post-translocation (POST) complex to a pre-translocation (PRE) complex, thus giving elongation factor G a second chance to translocate the tRNAs correctly. Binds to ribosomes in a GTP-dependent manner. In Verminephrobacter eiseniae (strain EF01-2), this protein is Elongation factor 4.